The sequence spans 156 residues: Persephin (156 aa).

An N-terminal signal peptide occupies residues 1 to 21 (MAAGRLRILCLLLLSLHPSLG). Cystine bridges form between Cys66–Cys124, Cys93–Cys152, and Cys97–Cys154.

Belongs to the TGF-beta family. GDNF subfamily. As to quaternary structure, homodimer; disulfide-linked. Interacts with GFRA4 coreceptor and RET: forms a 2:2:2 ternary complex composed of PSPN ligand, GFRA4 and RET receptor.

The protein resides in the secreted. Its function is as follows. Growth factor that exhibits neurotrophic activity on mesencephalic dopaminergic and motor neurons. Acts by binding to its coreceptor, GFRA4, leading to autophosphorylation and activation of the RET receptor. The sequence is that of Persephin from Mus musculus (Mouse).